Here is a 309-residue protein sequence, read N- to C-terminus: Putative pyridoxal kinase C6F6.11c (309 aa).

Positions 12 and 123 each coordinate substrate. ATP is bound by residues 182-183 (SS) and 209-221 (LIPV…RGTG). Asp222 contributes to the substrate binding site.

Belongs to the pyridoxine kinase family. A divalent metal cation serves as cofactor.

It localises to the cytoplasm. The protein resides in the nucleus. It carries out the reaction pyridoxal + ATP = pyridoxal 5'-phosphate + ADP + H(+). Functionally, required for synthesis of pyridoxal-5-phosphate from vitamin B6. This is Putative pyridoxal kinase C6F6.11c from Schizosaccharomyces pombe (strain 972 / ATCC 24843) (Fission yeast).